A 633-amino-acid polypeptide reads, in one-letter code: Phosphomethylpyrimidine synthase (633 aa).

Substrate is bound by residues N245, M274, Y303, H339, 359–361 (SRG), 400–403 (DGLR), and E439. Residue H443 coordinates Zn(2+). Y466 lines the substrate pocket. Residue H507 coordinates Zn(2+). [4Fe-4S] cluster is bound by residues C587, C590, and C595.

The protein belongs to the ThiC family. As to quaternary structure, homodimer. [4Fe-4S] cluster serves as cofactor.

The enzyme catalyses 5-amino-1-(5-phospho-beta-D-ribosyl)imidazole + S-adenosyl-L-methionine = 4-amino-2-methyl-5-(phosphooxymethyl)pyrimidine + CO + 5'-deoxyadenosine + formate + L-methionine + 3 H(+). It functions in the pathway cofactor biosynthesis; thiamine diphosphate biosynthesis. Its function is as follows. Catalyzes the synthesis of the hydroxymethylpyrimidine phosphate (HMP-P) moiety of thiamine from aminoimidazole ribotide (AIR) in a radical S-adenosyl-L-methionine (SAM)-dependent reaction. The protein is Phosphomethylpyrimidine synthase of Neisseria meningitidis serogroup B (strain ATCC BAA-335 / MC58).